The sequence spans 676 residues: PAS domain-containing protein cky-1 (676 aa).

The span at 45–72 (SALNNNSINVPNNNTMGMSSAGSSNGSN) shows a compositional bias: low complexity. The interval 45–89 (SALNNNSINVPNNNTMGMSSAGSSNGSNLVNGQQRSTRGASKQRR) is disordered. Positions 73 to 84 (LVNGQQRSTRGA) are enriched in polar residues. The basic motif stretch occupies residues 76 to 89 (GQQRSTRGASKQRR). The bHLH domain occupies 76–129 (GQQRSTRGASKQRRDQINVEIQKLRDLLPLSDLIKDRLFQLQVMSLGCIFIRKH). The helix-loop-helix motif stretch occupies residues 90–129 (DQINVEIQKLRDLLPLSDLIKDRLFQLQVMSLGCIFIRKH). Residues 165 to 215 (MLMVTRSGKILHVSDNASEYLGHSVEEIMCQGDSIYDLVDGRDHGAVQAEL) enclose the PAS domain. Positions 436-462 (FSCQDSPPPSEEQQPSSPQTPPFTEQP) are disordered.

Heterodimer; efficient DNA binding requires dimerization with another bHLH protein. Forms a heterodimer with ARNT homolog aha-1; binds DNA as heterodimer.

The protein localises to the nucleus. Its function is as follows. Transcription factor. Efficient DNA binding requires dimerization with another bHLH protein, such as ARNT homolog aha-1. Regulates transcription of target genes, probably acting in complex with aha-1. The chain is PAS domain-containing protein cky-1 from Caenorhabditis elegans.